Reading from the N-terminus, the 161-residue chain is Phosphopantetheine adenylyltransferase (161 aa).

Residue Thr-10 coordinates substrate. Residues 10 to 11 (TF) and His-18 each bind ATP. Lys-42, Met-74, and Arg-88 together coordinate substrate. Residues 89–91 (GVR), Glu-99, and 124–130 (LSFVSSS) each bind ATP.

Belongs to the bacterial CoaD family. Homohexamer. It depends on Mg(2+) as a cofactor.

It is found in the cytoplasm. The catalysed reaction is (R)-4'-phosphopantetheine + ATP + H(+) = 3'-dephospho-CoA + diphosphate. It participates in cofactor biosynthesis; coenzyme A biosynthesis; CoA from (R)-pantothenate: step 4/5. Its function is as follows. Reversibly transfers an adenylyl group from ATP to 4'-phosphopantetheine, yielding dephospho-CoA (dPCoA) and pyrophosphate. This Proteus mirabilis (strain HI4320) protein is Phosphopantetheine adenylyltransferase.